A 396-amino-acid polypeptide reads, in one-letter code: Ribosomal RNA large subunit methyltransferase I (396 aa).

Residues 2-81 (SVRLVLAKGR…ESIDIAFFSR (80 aa)) enclose the PUA domain.

The protein belongs to the methyltransferase superfamily. RlmI family.

Its subcellular location is the cytoplasm. The catalysed reaction is cytidine(1962) in 23S rRNA + S-adenosyl-L-methionine = 5-methylcytidine(1962) in 23S rRNA + S-adenosyl-L-homocysteine + H(+). In terms of biological role, specifically methylates the cytosine at position 1962 (m5C1962) of 23S rRNA. This is Ribosomal RNA large subunit methyltransferase I from Escherichia coli (strain K12 / MC4100 / BW2952).